The sequence spans 481 residues: ATP synthase subunit beta, chloroplastic (481 aa).

161-168 is a binding site for ATP; that stretch reads GGAGVGKT.

The protein belongs to the ATPase alpha/beta chains family. In terms of assembly, F-type ATPases have 2 components, CF(1) - the catalytic core - and CF(0) - the membrane proton channel. CF(1) has five subunits: alpha(3), beta(3), gamma(1), delta(1), epsilon(1). CF(0) has four main subunits: a(1), b(1), b'(1) and c(9-12).

It is found in the plastid. Its subcellular location is the chloroplast thylakoid membrane. The catalysed reaction is ATP + H2O + 4 H(+)(in) = ADP + phosphate + 5 H(+)(out). Produces ATP from ADP in the presence of a proton gradient across the membrane. The catalytic sites are hosted primarily by the beta subunits. The chain is ATP synthase subunit beta, chloroplastic from Mesostigma viride (Green alga).